The primary structure comprises 63 residues: Large ribosomal subunit protein bL28c (63 aa).

The protein belongs to the bacterial ribosomal protein bL28 family.

The protein localises to the plastid. It is found in the chloroplast. The protein is Large ribosomal subunit protein bL28c of Pyropia yezoensis (Susabi-nori).